Here is a 136-residue protein sequence, read N- to C-terminus: ATP synthase epsilon chain (136 aa).

Positions 100–120 (QGALEEANRGEDKPNQLKASN) are disordered. The segment covering 105 to 114 (EANRGEDKPN) has biased composition (basic and acidic residues).

It belongs to the ATPase epsilon chain family. In terms of assembly, F-type ATPases have 2 components, CF(1) - the catalytic core - and CF(0) - the membrane proton channel. CF(1) has five subunits: alpha(3), beta(3), gamma(1), delta(1), epsilon(1). CF(0) has three main subunits: a, b and c.

It is found in the cellular thylakoid membrane. In terms of biological role, produces ATP from ADP in the presence of a proton gradient across the membrane. This is ATP synthase epsilon chain (atpC) from Synechocystis sp. (strain ATCC 27184 / PCC 6803 / Kazusa).